The chain runs to 649 residues: Choline transporter-like protein 3 (649 aa).

A helical membrane pass occupies residues 33–53; that stretch reads AWLFLFFLFWTGLVFIMGYSV. N-linked (GlcNAc...) asparagine glycans are attached at residues asparagine 136 and asparagine 151. 5 helical membrane passes run 213-233, 235-255, 284-304, 334-354, and 384-404; these read DTVL…MFTF, FITT…LLFV, LLGF…LIYV, LWTF…LLSL, and LIGL…AVAG. N-linked (GlcNAc...) asparagine glycans are attached at residues asparagine 414, asparagine 502, and asparagine 520. 2 helical membrane passes run 533–553 and 562–582; these read FIIF…GLMA and VWAV…HSFL.

This sequence belongs to the CTL (choline transporter-like) family.

It is found in the membrane. The sequence is that of Choline transporter-like protein 3 (SLC44A3) from Bos taurus (Bovine).